A 409-amino-acid polypeptide reads, in one-letter code: N-carbamoyl-L-amino acid amidohydrolase (409 aa).

A divalent metal cation-binding residues include histidine 79, aspartate 90, glutamate 125, and histidine 189. An N-carbamoyl-L-alpha-amino acid-binding residues include glutamine 192, histidine 225, asparagine 273, arginine 286, and alanine 355. The involved in dimerization stretch occupies residues 208-325; it reads GIAGLIWVKF…TTERLQEMAP (118 aa). A divalent metal cation is bound at residue histidine 380.

Belongs to the peptidase M20 family. As to quaternary structure, homodimer. Mn(2+) serves as cofactor. Ni(2+) is required as a cofactor. It depends on Co(2+) as a cofactor. The cofactor is Fe(2+).

The enzyme catalyses an N-carbamoyl-L-alpha-amino acid + H2O + 2 H(+) = an L-alpha-amino acid + NH4(+) + CO2. The catalysed reaction is N-carbamoyl-L-methionine + H2O + 2 H(+) = L-methionine + NH4(+) + CO2. It carries out the reaction N-acetyl-L-methionine + H2O = L-methionine + acetate. It catalyses the reaction N-carbamoyl-L-alanine + H2O + 2 H(+) = L-alanine + NH4(+) + CO2. The enzyme catalyses N-carbamoyl-L-glutamate + H2O + 2 H(+) = L-glutamate + NH4(+) + CO2. The catalysed reaction is N-carbamoylglycine + H2O + 2 H(+) = glycine + NH4(+) + CO2. It carries out the reaction N-carbamoyl-L-leucine + H2O + 2 H(+) = L-leucine + NH4(+) + CO2. Catalyzes the hydrolysis of aliphatic N-carbamoyl-L-alpha-amino acids to free L-alpha-amino acids. Is strictly L-specific since it is inactive toward N-carbamoyl-D-alpha-amino acids. Is not able to use aromatic N-carbamoyl-L-alpha-amino acids like N-carbamoyl-L-tryptophan and N-carbamoyl-L-phenylalanine as substrates, but is also able to hydrolyze N-acetyl-L-methionine. In Geobacillus stearothermophilus (Bacillus stearothermophilus), this protein is N-carbamoyl-L-amino acid amidohydrolase.